The primary structure comprises 258 residues: UPF0246 protein LHK_02295 (258 aa).

The protein belongs to the UPF0246 family.

This is UPF0246 protein LHK_02295 from Laribacter hongkongensis (strain HLHK9).